We begin with the raw amino-acid sequence, 194 residues long: Peptidyl-tRNA hydrolase (194 aa).

Tyr-17 is a tRNA binding site. His-22 acts as the Proton acceptor in catalysis. 3 residues coordinate tRNA: Phe-68, Asn-70, and Asn-116.

This sequence belongs to the PTH family. In terms of assembly, monomer.

The protein localises to the cytoplasm. It carries out the reaction an N-acyl-L-alpha-aminoacyl-tRNA + H2O = an N-acyl-L-amino acid + a tRNA + H(+). Hydrolyzes ribosome-free peptidyl-tRNAs (with 1 or more amino acids incorporated), which drop off the ribosome during protein synthesis, or as a result of ribosome stalling. Functionally, catalyzes the release of premature peptidyl moieties from peptidyl-tRNA molecules trapped in stalled 50S ribosomal subunits, and thus maintains levels of free tRNAs and 50S ribosomes. The protein is Peptidyl-tRNA hydrolase of Proteus mirabilis (strain HI4320).